The primary structure comprises 40 residues: DCPSGWSSFKQYCYKPFKQLKTWEDAERFCLEQVKGAHLV.

A C-type lectin domain is found at 1 to 40; sequence DCPSGWSSFKQYCYKPFKQLKTWEDAERFCLEQVKGAHLV. Cysteine 2 and cysteine 13 are disulfide-bonded.

The protein belongs to the snaclec family. In terms of assembly, heterodimer of subunits alpha and beta; disulfide-linked. In terms of tissue distribution, expressed by the venom gland.

It is found in the secreted. Platelet antagonist that specifically and reversibly binds to a site on platelet glycoprotein Ibalpha (GP1BA) close to or identical with the site for vWF binding. It inhibits the binding of vWF to platelets and vWF-dependent shear-induced platelet aggregation. The sequence is that of Snaclec tokaracetin subunit alpha from Protobothrops tokarensis (Tokara habu).